Here is a 953-residue protein sequence, read N- to C-terminus: Coatomer subunit beta (953 aa).

At threonine 2 the chain carries N-acetylthreonine. HEAT repeat units lie at residues 96 to 131 (HEMILVCDAYRKDLQHPNEFIRGSTLRFLCKLKEAE), 132 to 168 (LLEPLMPAIRACLEHRHSYVRRNAVLAIYTIYRNFEH), 240 to 276 (SERARFIRCIYNLLQSSSPAVKYEAAGTLVTLSSAPT), 277 to 314 (AIKAAAQCYIDLIIKESDNNVKLIVLDRLVELKEHPAH), 316 to 353 (RVLQDLVMDILRVLSTPDLEVRKKTLQLALDLVSSRNV), and 396 to 433 (DMAANVIPVLMEFLSDSNEAAAADVLEFVREAIQRFDN). Residue lysine 494 is modified to N6-acetyllysine.

As to quaternary structure, oligomeric complex that consists of at least the alpha, beta, beta', gamma, delta, epsilon and zeta subunits. Interacts with CAPN8. Interacts with SCYL1 and PRKCE. Interacts with COPG1. Interacts with ARF1 (myristoylated); this interaction is required for binding of COPB1 to Golgi membranes. Interacts (via trunk domain) with ARF1 (via switch I region); the interaction is direct. Interacts with KCNK2 (via N-terminus); this interaction increases the channel-mediated whole cell currents and promotes plasma membrane expression of KCNK2. Interacts with STX17. Interacts with TMEM115. Interacts with TMEM41B. In terms of processing, proteolytically cleaved between Ser-528 and Ser-529 by CAPN8. In terms of tissue distribution, predominantly expressed in the upper one-third of the oxyntic mucosa and in most regions of the pyloric mucosa. Ubiquitously expressed including platelet, liver, heart, spleen, lung and kidney.

It localises to the cytoplasm. The protein resides in the golgi apparatus membrane. The protein localises to the cytoplasmic vesicle. It is found in the COPI-coated vesicle membrane. Its subcellular location is the cell membrane. It localises to the endoplasmic reticulum-Golgi intermediate compartment. In terms of biological role, the coatomer is a cytosolic protein complex that binds to dilysine motifs and reversibly associates with Golgi non-clathrin-coated vesicles, which further mediate biosynthetic protein transport from the ER, via the Golgi up to the trans Golgi network. Coatomer complex is required for budding from Golgi membranes, and is essential for the retrograde Golgi-to-ER transport of dilysine-tagged proteins. In mammals, the coatomer can only be recruited by membranes associated to ADP-ribosylation factors (ARFs), which are small GTP-binding proteins; the complex also influences the Golgi structural integrity, as well as the processing, activity, and endocytic recycling of LDL receptors. Involved in the Golgi disassembly and reassembly processes during cell cycle. Involved in autophagy by playing a role in early endosome function. Plays a role in organellar compartmentalization of secretory compartments including endoplasmic reticulum (ER)-Golgi intermediate compartment (ERGIC), Golgi, trans-Golgi network (TGN) and recycling endosomes, and in biosynthetic transport of CAV1. Plays a functional role in facilitating the transport of kappa-type opioid receptor mRNAs into axons and enhances translation of these proteins in cortical neurons. Required for limiting lipid storage in lipid droplets. Involved in lipid homeostasis by regulating the presence of perilipin family members PLIN2 and PLIN3 at the lipid droplet surface and promoting the association of adipocyte triglyceride lipase (PNPLA2) with the lipid droplet surface to mediate lipolysis. This chain is Coatomer subunit beta (Copb1), found in Mus musculus (Mouse).